The sequence spans 132 residues: Riboflavin kinase (132 aa).

Position 10–15 (10–15 (GLGEGR)) interacts with CDP. Mg(2+) is bound by residues threonine 39 and asparagine 41. Positions 95, 96, and 103 each coordinate FMN. Residue 108-111 (MKLR) coordinates CDP.

In terms of assembly, monomer. Mg(2+) serves as cofactor.

It carries out the reaction riboflavin + CTP = CDP + FMN + H(+). It functions in the pathway cofactor biosynthesis; FMN biosynthesis; FMN from riboflavin (CTP route): step 1/1. Catalyzes the CTP-dependent phosphorylation of riboflavin (vitamin B2) to form flavin mononucleotide (FMN). Can also utilize UTP as the phosphate donor, although less efficiently, and it is unclear if ATP and GTP can also serve as substrates or not. The protein is Riboflavin kinase (ribK) of Methanocaldococcus jannaschii (strain ATCC 43067 / DSM 2661 / JAL-1 / JCM 10045 / NBRC 100440) (Methanococcus jannaschii).